The primary structure comprises 104 residues: Small ribosomal subunit protein uS10 (104 aa).

Belongs to the universal ribosomal protein uS10 family. Part of the 30S ribosomal subunit.

Its function is as follows. Involved in the binding of tRNA to the ribosomes. The sequence is that of Small ribosomal subunit protein uS10 from Dichelobacter nodosus (strain VCS1703A).